The chain runs to 369 residues: Transforming protein Maf (369 aa).

Disordered regions lie at residues 57 to 85 (STPMSTPCSSVPPSPSFSAPSPGSGTDQK) and 169 to 243 (GGAP…GLHF). A compositionally biased stretch (basic residues) spans 173 to 183 (HYHHHHHHPHH). Over residues 184–193 (GGGGGGGGHP) the composition is skewed to gly residues. Low complexity predominate over residues 194–211 (HGAAPGSAPPSSASSSAA). Over residues 212-226 (GSGGGGGGGGGGAGG) the composition is skewed to gly residues. Residues 274-299 (RLKQKRRTLKNRGYAQSCRFKRVQQR) form a basic motif region. The bZIP domain occupies 274-337 (RLKQKRRTLK…DAYKEKYEKL (64 aa)). The interval 302–323 (LESEKNQLLQQVEHLKQEISRL) is leucine-zipper. Positions 341–369 (GFRENGSSSDNPSSPEFFMYPRESSTTVM) are disordered. A compositionally biased stretch (polar residues) spans 345-354 (NGSSSDNPSS).

Belongs to the bZIP family. Maf subfamily.

The protein resides in the host nucleus. Functionally, might be a transcriptional trans-activator. The sequence is that of Transforming protein Maf (V-MAF) from Galliformes.